A 318-amino-acid chain; its full sequence is Homoserine kinase (318 aa).

Pro97–Cys107 contacts ATP.

It belongs to the GHMP kinase family. Homoserine kinase subfamily.

The protein resides in the cytoplasm. It carries out the reaction L-homoserine + ATP = O-phospho-L-homoserine + ADP + H(+). It participates in amino-acid biosynthesis; L-threonine biosynthesis; L-threonine from L-aspartate: step 4/5. Its function is as follows. Catalyzes the ATP-dependent phosphorylation of L-homoserine to L-homoserine phosphate. The sequence is that of Homoserine kinase from Vibrio cholerae serotype O1 (strain M66-2).